The sequence spans 576 residues: uncharacterized protein (576 aa).

Positions 41 to 78 (EKESESKLNSKSTTLQSSDSEDWDSEENEDDITDVGVP) are disordered. Over residues 49–58 (NSKSTTLQSS) the composition is skewed to low complexity. Positions 59–73 (DSEDWDSEENEDDIT) are enriched in acidic residues. WD repeat units follow at residues 87–126 (GHSK…ATNP), 195–235 (GHIA…SQLE), 248–288 (LSRI…KRPV), 296–335 (LPQQ…KCVN), and 393–433 (TVTA…RGVK). Positions 547-576 (SETQPTPIYQGVTEGDISSEEGNPSKKQKR) are disordered.

This is an uncharacterized protein from Schizosaccharomyces pombe (strain 972 / ATCC 24843) (Fission yeast).